The chain runs to 285 residues: MRMIIVSGRSGSGKSTALDVLEDNGFYCVDNLPAGLLPELAERALINTELAEPLLAVSIDARNLPSHLTRFPQMLSEVRLRNIQCDVLYLDADEATLLKRFSETRRRHPLSTADRSLAEAIRDETALLGPIIDLADLKINTTHLNLYQLRDALKLRLLNKPEPGTAFLIESFGFKRGMPVDADLVFDVRCLPNPYWKPELRDHSGLEQPVIDYLSVQPDVEEMFQDIFAYLNKWLPRFAASNRSYVTIAIGCTGGHHRSVYLTERLGQVLQQSLKNVQVRHRDLS.

8 to 15 (GRSGSGKS) provides a ligand contact to ATP. 60-63 (DARN) lines the GTP pocket.

Belongs to the RapZ-like family.

In terms of biological role, displays ATPase and GTPase activities. This Pseudomonas syringae pv. syringae (strain B728a) protein is Nucleotide-binding protein Psyr_4150.